Here is a 130-residue protein sequence, read N- to C-terminus: uncharacterized protein (130 aa).

This is an uncharacterized protein from Sputnik virophage.